We begin with the raw amino-acid sequence, 346 residues long: tRNA N6-adenosine threonylcarbamoyltransferase (346 aa).

Residues histidine 111 and histidine 115 each contribute to the Fe cation site. Substrate is bound by residues leucine 134–glycine 138, aspartate 167, glycine 180, and asparagine 277. Aspartate 305 provides a ligand contact to Fe cation.

The protein belongs to the KAE1 / TsaD family. Fe(2+) is required as a cofactor.

It localises to the cytoplasm. The enzyme catalyses L-threonylcarbamoyladenylate + adenosine(37) in tRNA = N(6)-L-threonylcarbamoyladenosine(37) in tRNA + AMP + H(+). In terms of biological role, required for the formation of a threonylcarbamoyl group on adenosine at position 37 (t(6)A37) in tRNAs that read codons beginning with adenine. Is involved in the transfer of the threonylcarbamoyl moiety of threonylcarbamoyl-AMP (TC-AMP) to the N6 group of A37, together with TsaE and TsaB. TsaD likely plays a direct catalytic role in this reaction. In Bordetella parapertussis (strain 12822 / ATCC BAA-587 / NCTC 13253), this protein is tRNA N6-adenosine threonylcarbamoyltransferase.